Consider the following 480-residue polypeptide: EGF-like repeat and discoidin I-like domain-containing protein 3 (480 aa).

A signal peptide spans 1–23 (MKRSVAVWLLVGLSLGVPQFGKG). One can recognise an EGF-like 1 domain in the interval 24–60 (DICDPNPCENGGICLPGLADGSFSCECPDGFTDPNCS). 3 disulfides stabilise this stretch: Cys-26/Cys-37, Cys-31/Cys-48, and Cys-50/Cys-59. Thr-73 is a glycosylation site (O-linked (GalNAc...) threonine). EGF-like domains follow at residues 74–117 (SAGP…IHCQ) and 119–155 (NINECEVEPCKNGGICTDLVANYSCECPGEFMGRNCQ). Intrachain disulfides connect Cys-78/Cys-89, Cys-83/Cys-105, and Cys-107/Cys-116. O-linked (Fuc...) threonine glycosylation occurs at Thr-88. Positions 96–98 (RGD) match the Cell attachment site motif. 3 residues coordinate Ca(2+): Asn-119, Ile-120, and Glu-122. Intrachain disulfides connect Cys-123–Cys-134, Cys-128–Cys-143, Cys-145–Cys-154, Cys-158–Cys-314, Cys-301–Cys-305, and Cys-319–Cys-476. Ca(2+) is bound by residues Asp-136 and Leu-137. N-linked (GlcNAc...) asparagine glycosylation is present at Asn-140. F5/8 type C domains lie at 158 to 314 (CSGP…LLGC) and 319 to 476 (CSEP…LLGC).

Its subcellular location is the secreted. In terms of biological role, promotes adhesion of endothelial cells through interaction with the alpha-v/beta-3 integrin receptor. Inhibits formation of vascular-like structures. May be involved in regulation of vascular morphogenesis of remodeling in embryonic development. The polypeptide is EGF-like repeat and discoidin I-like domain-containing protein 3 (EDIL3) (Homo sapiens (Human)).